Consider the following 78-residue polypeptide: RNA-binding protein Hfq (78 aa).

Residues 10 to 69 (DPFLNTLRKEHVPVSIYLVNGIKLQGQIESFDQYVVLLRNTVTQMVYKHAISTVVPARAV) form the Sm domain.

Belongs to the Hfq family. As to quaternary structure, homohexamer.

In terms of biological role, RNA chaperone that binds small regulatory RNA (sRNAs) and mRNAs to facilitate mRNA translational regulation in response to envelope stress, environmental stress and changes in metabolite concentrations. Also binds with high specificity to tRNAs. The sequence is that of RNA-binding protein Hfq from Bordetella petrii (strain ATCC BAA-461 / DSM 12804 / CCUG 43448).